The chain runs to 275 residues: Ribosomal RNA small subunit methyltransferase A (275 aa).

6 residues coordinate S-adenosyl-L-methionine: N28, L30, G55, E77, D103, and N123.

It belongs to the class I-like SAM-binding methyltransferase superfamily. rRNA adenine N(6)-methyltransferase family. RsmA subfamily.

It is found in the cytoplasm. It carries out the reaction adenosine(1518)/adenosine(1519) in 16S rRNA + 4 S-adenosyl-L-methionine = N(6)-dimethyladenosine(1518)/N(6)-dimethyladenosine(1519) in 16S rRNA + 4 S-adenosyl-L-homocysteine + 4 H(+). Specifically dimethylates two adjacent adenosines (A1518 and A1519) in the loop of a conserved hairpin near the 3'-end of 16S rRNA in the 30S particle. May play a critical role in biogenesis of 30S subunits. The protein is Ribosomal RNA small subunit methyltransferase A of Allorhizobium ampelinum (strain ATCC BAA-846 / DSM 112012 / S4) (Agrobacterium vitis (strain S4)).